A 226-amino-acid chain; its full sequence is PKHD-type hydroxylase mma_3618 (226 aa).

One can recognise a Fe2OG dioxygenase domain in the interval 78 to 178 (RYMPPLFNRY…RISSFFWVQS (101 aa)). Positions 96, 98, and 159 each coordinate Fe cation. Residue Arg-169 participates in 2-oxoglutarate binding.

It depends on Fe(2+) as a cofactor. L-ascorbate is required as a cofactor.

This is PKHD-type hydroxylase mma_3618 from Janthinobacterium sp. (strain Marseille) (Minibacterium massiliensis).